Reading from the N-terminus, the 603-residue chain is Vacuolar protein sorting-associated protein 33A (603 aa).

It belongs to the STXBP/unc-18/SEC1 family. In terms of assembly, probable component of the homotypic fusion and vacuole protein sorting (HOPS) complex consisting of the core class C Vps proteins vps-11, vps-16, vps-18, and which further associates with vps-33.1, vps-39 and vps-41. Interacts with spe-39. As to expression, ubiquitously expressed at high levels in somatic tissues including the pharynx, muscles, hypodermis, neurons, coelomocytes and spermatheca. Expressed in the intestine.

The protein localises to the lysosome. The protein resides in the early endosome. It is found in the late endosome. Its subcellular location is the apical cell membrane. Its function is as follows. Plays a role in vesicle-mediated protein trafficking to lysosomal compartments including the endocytic membrane transport pathways. Believed to act as a component of the putative HOPS endosomal tethering complex which is proposed to be involved in the rab-5-to-rab-7 endosome conversion probably implicating sand-1, and via binding SNAREs and SNARE complexes to mediate tethering and docking events during SNARE-mediated membrane fusion. The HOPS complex is proposed to be recruited to rab-7 on the late endosomal membrane and to regulate late endocytic, phagocytic and autophagic traffic towards lysosomes. Within the HOPS complex, contributes to the normal development of gut granules in embryonic and adult intestinal cells. Required for endosome/lysosome fusion. Required for early embryonic development. The protein is Vacuolar protein sorting-associated protein 33A of Caenorhabditis elegans.